A 376-amino-acid polypeptide reads, in one-letter code: Beta-centractin (376 aa).

Methionine 1 carries the post-translational modification N-acetylmethionine. Position 4 is a 3'-nitrotyrosine (tyrosine 4).

The protein belongs to the actin family. ARP1 subfamily.

It is found in the cytoplasm. The protein resides in the cytoskeleton. The protein localises to the microtubule organizing center. Its subcellular location is the centrosome. Functionally, component of a multi-subunit complex involved in microtubule based vesicle motility. It is associated with the centrosome. This is Beta-centractin (ACTR1B) from Bos taurus (Bovine).